Consider the following 339-residue polypeptide: Nicotinate-nucleotide--dimethylbenzimidazole phosphoribosyltransferase (339 aa).

Glu306 acts as the Proton acceptor in catalysis.

This sequence belongs to the CobT family.

It carries out the reaction 5,6-dimethylbenzimidazole + nicotinate beta-D-ribonucleotide = alpha-ribazole 5'-phosphate + nicotinate + H(+). The protein operates within nucleoside biosynthesis; alpha-ribazole biosynthesis; alpha-ribazole from 5,6-dimethylbenzimidazole: step 1/2. Functionally, catalyzes the synthesis of alpha-ribazole-5'-phosphate from nicotinate mononucleotide (NAMN) and 5,6-dimethylbenzimidazole (DMB). This is Nicotinate-nucleotide--dimethylbenzimidazole phosphoribosyltransferase from Brucella canis (strain ATCC 23365 / NCTC 10854 / RM-666).